The following is a 216-amino-acid chain: Probable RNA 2'-phosphotransferase 1 (216 aa).

It belongs to the KptA/TPT1 family.

In terms of biological role, removes the 2'-phosphate from RNA via an intermediate in which the phosphate is ADP-ribosylated by NAD followed by a presumed transesterification to release the RNA and generate ADP-ribose 1''-2''-cyclic phosphate (APPR&gt;P). May function as an ADP-ribosylase. The sequence is that of Probable RNA 2'-phosphotransferase 1 (kptA1) from Archaeoglobus fulgidus (strain ATCC 49558 / DSM 4304 / JCM 9628 / NBRC 100126 / VC-16).